The chain runs to 640 residues: Probable threonine--tRNA ligase, cytoplasmic (640 aa).

The TGS domain occupies 1–63; that stretch reads MYEVKLKVEL…LKDCKLELMT (63 aa).

Belongs to the class-II aminoacyl-tRNA synthetase family.

It is found in the cytoplasm. It catalyses the reaction tRNA(Thr) + L-threonine + ATP = L-threonyl-tRNA(Thr) + AMP + diphosphate + H(+). The sequence is that of Probable threonine--tRNA ligase, cytoplasmic from Encephalitozoon cuniculi (strain GB-M1) (Microsporidian parasite).